Consider the following 1178-residue polypeptide: Pyruvate carboxylase, mitochondrial (1178 aa).

A mitochondrion-targeting transit peptide spans 1-20 (MLKFRTVHGGLRLLGIRRTS). N6-acetyllysine occurs at positions 35 and 39. Positions 36–486 (PIKKVMVANR…DTQFIDENPE (451 aa)) constitute a Biotin carboxylation domain. Lys-79 bears the N6-acetyllysine; alternate mark. At Lys-79 the chain carries N6-succinyllysine; alternate. Lys-148 and Lys-152 each carry N6-acetyllysine. Residues Lys-152 and Glu-236 each coordinate ATP. Residues 156–353 (RAIAIAAGVP…LVHAQIHVAE (198 aa)) enclose the ATP-grasp domain. Residue Lys-241 is modified to N6-acetyllysine. Position 271 (His-271) interacts with ATP. 2 positions are modified to N6-acetyllysine: Lys-297 and Lys-319. Arg-328 is an active-site residue. Lys-434 is subject to N6-acetyllysine. Residue Lys-442 is modified to N6-succinyllysine. The region spanning 563–832 (LLLMDTTFRD…DTEVPMERVF (270 aa)) is the Pyruvate carboxyltransferase domain. 571–575 (RDAHQ) serves as a coordination point for substrate. Residue Asp-572 participates in Mn(2+) binding. Lys-589 is modified (N6-acetyllysine). Arg-644 contacts substrate. An N6-acetyllysine mark is found at Lys-661 and Lys-717. Position 741 (Lys-741) interacts with Mn(2+). Lys-741 carries the N6-carboxylysine modification. The residue at position 748 (Lys-748) is an N6-acetyllysine. Mn(2+) contacts are provided by His-771 and His-773. Residue Lys-892 is modified to N6-acetyllysine. Thr-908 contributes to the substrate binding site. 2 positions are modified to N6-acetyllysine: Lys-969 and Lys-992. At Thr-1003 the chain carries Phosphothreonine. 3 positions are modified to N6-acetyllysine: Lys-1061, Lys-1090, and Lys-1124. The region spanning 1109-1178 (KGQIGAPMPG…EGDDLILEIE (70 aa)) is the Biotinyl-binding domain. Lys-1144 bears the N6-biotinyllysine mark.

As to quaternary structure, homotetramer. Interacts (via the biotin carboxylation domain) with SIRT4. Requires biotin as cofactor. It depends on Mn(2+) as a cofactor. Acetylation of Lys-748 might play a role in catalytic activity regulation.

The protein resides in the mitochondrion matrix. The catalysed reaction is hydrogencarbonate + pyruvate + ATP = oxaloacetate + ADP + phosphate + H(+). The protein operates within carbohydrate biosynthesis; gluconeogenesis. Functionally, pyruvate carboxylase catalyzes a 2-step reaction, involving the ATP-dependent carboxylation of the covalently attached biotin in the first step and the transfer of the carboxyl group to pyruvate in the second. Catalyzes in a tissue specific manner, the initial reactions of glucose (liver, kidney) and lipid (adipose tissue, liver, brain) synthesis from pyruvate. The sequence is that of Pyruvate carboxylase, mitochondrial from Homo sapiens (Human).